A 348-amino-acid chain; its full sequence is Ion-translocating oxidoreductase complex subunit D (348 aa).

Topologically, residues 1–22 (MAFFIASSPHLRSKRSTADVMR) are cytoplasmic. A run of 2 helical transmembrane segments spans residues 23–43 (WVLV…GYGT) and 44–64 (LIQL…IMLL). Residues 65–71 (RKRSPIS) are Cytoplasmic-facing. A helical transmembrane segment spans residues 72–91 (ALRDYSAVVTAWLLAVAIPP). Over 92–94 (LSP) the chain is Periplasmic. Residues 95-117 (WWVVVIGLIFAIVIAKHLYGGLG) traverse the membrane as a helical segment. Topologically, residues 118-125 (QNPFNPAM) are cytoplasmic. The helical transmembrane segment at 126–146 (IAYVVLLISFPVQMTSWMAPI) threads the bilayer. Residues 147 to 213 (KLTAEPSSLV…ETLTQPQFSG (67 aa)) are Periplasmic-facing. At Thr-187 the chain carries FMN phosphoryl threonine. A helical membrane pass occupies residues 214-234 (FAGIGWEWVNIAYLLGGLILL). At 235 to 242 (KLRIIRWH) the chain is on the cytoplasmic side. The chain crosses the membrane as a helical span at residues 243 to 263 (IPVAMLAGLVFTALLAQLFAP). Topologically, residues 264 to 265 (GT) are periplasmic. Residues 266–286 (TASPMIHLLSGATMLGAFFIA) traverse the membrane as a helical segment. At 287–299 (TDPVSASTTDKGR) the chain is on the cytoplasmic side. A run of 2 helical transmembrane segments spans residues 300-320 (LIYG…GGFP) and 321-341 (DGVA…DYYT). At 342–348 (KPRTYGH) the chain is on the cytoplasmic side.

This sequence belongs to the NqrB/RnfD family. The complex is composed of six subunits: RnfA, RnfB, RnfC, RnfD, RnfE and RnfG. FMN is required as a cofactor.

The protein resides in the cell inner membrane. Part of a membrane-bound complex that couples electron transfer with translocation of ions across the membrane. The polypeptide is Ion-translocating oxidoreductase complex subunit D (Vibrio cholerae serotype O1 (strain ATCC 39541 / Classical Ogawa 395 / O395)).